Here is a 455-residue protein sequence, read N- to C-terminus: MWLELVLASLLGFVIYWFVSRDKEETLPLGDGWWGPGSKPSAKEDESIRPFKVETSDEEIKDLHQRIDRFRASPPLEGSRFHYGFNSNYMKKVVSYWRNEFDWRKQVEILNQYPHFKTKIEGLDIHFIHVKPPQLPSGRTPKPLLMVHGWPGSFYEFYKIIPLLTDPKSHGLSDEHVFEVICPSIPGYGYSEASSKKGLNSVATARIFYKLMTRLGFQKFYIQGGDWGSLICTNMAQMVPNHVKGLHLNMAFISRSFYTMTPLLGQRFGRFLGYTEKDIELLYPYKEKVFYSIMRESGYLHIQATKPDTVGCALNDSPVGLAAYILEKFSTWTKSEYRELEDGGLERKFSLDDLLVNIMIYWTTGTIVSSQRYYKENLGQGIMVHKHEGMKVFVPTGFSAFPSELLHAPEKWVKVKYPKLISYSYMERGGHFAAFEEPKLLAQDIRKFVSLAELQ.

The helical; Signal-anchor for type III membrane protein transmembrane segment at 1 to 21 threads the bilayer; the sequence is MWLELVLASLLGFVIYWFVSR. Topologically, residues 22-455 are cytoplasmic; that stretch reads DKEETLPLGD…RKFVSLAELQ (434 aa). Asp226 (nucleophile) is an active-site residue. Arg295 is modified (dimethylated arginine). Tyr374 (proton donor) is an active-site residue. His431 functions as the Proton acceptor in the catalytic mechanism. At Lys439 the chain carries N6-acetyllysine.

Belongs to the peptidase S33 family.

Its subcellular location is the microsome membrane. It localises to the endoplasmic reticulum membrane. The catalysed reaction is cis-stilbene oxide + H2O = (1R,2R)-hydrobenzoin. It carries out the reaction 1-(4-methoxyphenyl)-N-methyl-N-[(3-methyloxetan-3-yl)methyl]methanamine + H2O = 2-{[(4-methoxybenzyl)(methyl)amino]methyl}-2-methylpropane-1,3-diol. The enzyme catalyses 8,9-epoxy-(5Z,11Z,14Z)-eicosatrienoate + H2O = 8,9-dihydroxy-(5Z,11Z,14Z)-eicosatrienoate. It catalyses the reaction 11,12-epoxy-(5Z,8Z,14Z)-eicosatrienoate + H2O = 11,12-dihydroxy-(5Z,8Z,14Z)-eicosatrienoate. The catalysed reaction is 2-(5Z,8Z,11Z,14Z-eicosatetraenoyl)-glycerol + H2O = glycerol + (5Z,8Z,11Z,14Z)-eicosatetraenoate + H(+). With respect to regulation, inhibited by 10-hydroxystearamide and methoxy-arachidonyl fluorophosphate. Biotransformation enzyme that catalyzes the hydrolysis of arene and aliphatic epoxides to less reactive and more water soluble dihydrodiols by the trans addition of water. May play a role in the metabolism of endogenous lipids such as epoxide-containing fatty acids. Metabolizes the abundant endocannabinoid 2-arachidonoylglycerol (2-AG) to free arachidonic acid (AA) and glycerol. Binds 20(S)-hydroxycholesterol (20(S)-OHC). This chain is Epoxide hydrolase 1, found in Rattus norvegicus (Rat).